A 281-amino-acid polypeptide reads, in one-letter code: ATP synthase gamma chain (281 aa).

This sequence belongs to the ATPase gamma chain family. As to quaternary structure, F-type ATPases have 2 components, CF(1) - the catalytic core - and CF(0) - the membrane proton channel. CF(1) has five subunits: alpha(3), beta(3), gamma(1), delta(1), epsilon(1). CF(0) has three main subunits: a, b and c.

It is found in the cell inner membrane. Its function is as follows. Produces ATP from ADP in the presence of a proton gradient across the membrane. The gamma chain is believed to be important in regulating ATPase activity and the flow of protons through the CF(0) complex. The chain is ATP synthase gamma chain from Ehrlichia canis (strain Jake).